Consider the following 101-residue polypeptide: MTSKLAVALLAAFVLSAALCEAAVLSRVSSELRCQCIKTHSTPFHPKYIKELRVIDSGPHCENSEIIVKLFNGNEVCLDPKEKWVQKVVQIFLKKAEKQDP.

The N-terminal stretch at 1–22 (MTSKLAVALLAAFVLSAALCEA) is a signal peptide. Residue arginine 27 is modified to Citrulline. 2 cysteine pairs are disulfide-bonded: cysteine 34–cysteine 61 and cysteine 36–cysteine 77.

This sequence belongs to the intercrine alpha (chemokine CxC) family. Homodimer. Interacts with TNFAIP6 (via Link domain); this interaction interferes with chemokine binding to glycosaminoglycans. Post-translationally, citrullination at Arg-27 prevents proteolysis, and dampens tissue inflammation, it also enhances leukocytosis, possibly through impaired chemokine clearance from the blood circulation.

Its subcellular location is the secreted. In terms of biological role, chemotactic factor that mediates inflammatory response by attracting neutrophils, basophils, and T-cells to clear pathogens and protect the host from infection. Also plays an important role in neutrophil activation. Released in response to an inflammatory stimulus, exerts its effect by binding to the G-protein-coupled receptors CXCR1 and CXCR2, primarily found in neutrophils, monocytes and endothelial cells. G-protein heterotrimer (alpha, beta, gamma subunits) constitutively binds to CXCR1/CXCR2 receptor and activation by IL8 leads to beta and gamma subunits release from Galpha (GNAI2 in neutrophils) and activation of several downstream signaling pathways including PI3K and MAPK pathways. In Canis lupus familiaris (Dog), this protein is Interleukin-8 (CXCL8).